The following is a 233-amino-acid chain: Proteasome subunit alpha (233 aa).

This sequence belongs to the peptidase T1A family. In terms of assembly, the 20S proteasome core is composed of 14 alpha and 14 beta subunits that assemble into four stacked heptameric rings, resulting in a barrel-shaped structure. The two inner rings, each composed of seven catalytic beta subunits, are sandwiched by two outer rings, each composed of seven alpha subunits. The catalytic chamber with the active sites is on the inside of the barrel. Has a gated structure, the ends of the cylinder being occluded by the N-termini of the alpha-subunits. Is capped at one or both ends by the proteasome regulatory ATPase, PAN. In terms of processing, the N-terminus is blocked.

The protein resides in the cytoplasm. With respect to regulation, the formation of the proteasomal ATPase PAN-20S proteasome complex, via the docking of the C-termini of PAN into the intersubunit pockets in the alpha-rings, triggers opening of the gate for substrate entry. Interconversion between the open-gate and close-gate conformations leads to a dynamic regulation of the 20S proteasome proteolysis activity. In terms of biological role, component of the proteasome core, a large protease complex with broad specificity involved in protein degradation. The T.acidophilum proteasome is able to cleave oligopeptides after Tyr, Leu, Phe, and to a lesser extent after Glu and Arg. Thus, displays chymotrypsin-like activity and low level of caspase-like and trypsin-like activities. This is Proteasome subunit alpha from Thermoplasma acidophilum (strain ATCC 25905 / DSM 1728 / JCM 9062 / NBRC 15155 / AMRC-C165).